The following is a 96-amino-acid chain: Myosuppressin (96 aa).

Positions 1-24 (MALGNGYYCAVVCVVLACASVVLC) are cleaved as a signal peptide. Positions 25–80 (APAQLCAGAADDDPRAARFCQALNTFLELYAEAAGEQVPEYQALVRDYPQLLDTGM) are excised as a propeptide. Gln-83 carries the pyrrolidone carboxylic acid; partial modification. Position 92 is a phenylalanine amide (Phe-92). Residue Arg-96 is a propeptide.

Belongs to the myosuppressin family. Expressed in corpora cardiaca (CC), corpora allata (CA), antennal lobe (AL) and gnathal ganglion (GNG) (at protein level). In its non-pyroglutamate form, expression in GNG detected in all animals, in AL, CC and in CA in most animals (at protein level). In its pyroglutamate form, expression in CC, CA and GNG detected in all animals, in AL in some animals (at protein level).

The protein resides in the secreted. In terms of biological role, myoinhibiting neuropeptide. The polypeptide is Myosuppressin (Agrotis ipsilon (Black cutworm moth)).